We begin with the raw amino-acid sequence, 328 residues long: C-type lectin domain family 4 member K (328 aa).

The Cytoplasmic portion of the chain corresponds to 1–43; sequence MTVEKEAPDAHFTVDKQNISLWPREPPPKSGPSLVPGKTPTVR. Residues 44–64 form a helical; Signal-anchor for type II membrane protein membrane-spanning segment; that stretch reads AALICLTLVLVASVLLQAVLY. Residues 65-328 lie on the Extracellular side of the membrane; sequence PRFMGTISDV…CKRPYVPSEP (264 aa). Asparagine 87, asparagine 113, and asparagine 180 each carry an N-linked (GlcNAc...) asparagine glycan. Residues 145–190 are a coiled coil; sequence EEVSTLNAQIPELKSDLEKASALNTKIRALQGSLENMSKLLKRQND. Residues 202-320 form the C-type lectin domain; the sequence is FKGNFYYFSL…CDKTFLFICK (119 aa). 2 disulfides stabilise this stretch: cysteine 223–cysteine 319 and cysteine 295–cysteine 311.

As to quaternary structure, homotrimer. Exclusively expressed by Langerhans cells. Expressed in astrocytoma and malignant ependymoma, but not in normal brain tissues.

The protein localises to the membrane. Functionally, calcium-dependent lectin displaying mannose-binding specificity. Induces the formation of Birbeck granules (BGs); is a potent regulator of membrane superimposition and zippering. Binds to sulfated as well as mannosylated glycans, keratan sulfate (KS) and beta-glucans. Facilitates uptake of antigens and is involved in the routing and/or processing of antigen for presentation to T cells. Major receptor on primary Langerhans cells for Candida species, Saccharomyces species, and Malassezia furfur. Protects against human immunodeficiency virus-1 (HIV-1) infection. Binds to high-mannose structures present on the envelope glycoprotein which is followed by subsequent targeting of the virus to the Birbeck granules leading to its rapid degradation. The polypeptide is C-type lectin domain family 4 member K (CD207) (Homo sapiens (Human)).